Here is a 192-residue protein sequence, read N- to C-terminus: Glycerol-3-phosphate acyltransferase (192 aa).

The next 5 helical transmembrane spans lie at 5-25, 50-70, 78-98, 112-132, and 153-173; these read VVLILSYILGSIPFSLIITRI, FLAALALFLDSFKGFIAVYIA, DFYIYVSAILAVLGHMFPIWL, ILIAFNIDITLVFVIIWIIVF, and SFFFQRNLFLTLLIIGALVFL.

It belongs to the PlsY family. Probably interacts with PlsX.

The protein resides in the cell membrane. The enzyme catalyses an acyl phosphate + sn-glycerol 3-phosphate = a 1-acyl-sn-glycero-3-phosphate + phosphate. It functions in the pathway lipid metabolism; phospholipid metabolism. Functionally, catalyzes the transfer of an acyl group from acyl-phosphate (acyl-PO(4)) to glycerol-3-phosphate (G3P) to form lysophosphatidic acid (LPA). This enzyme utilizes acyl-phosphate as fatty acyl donor, but not acyl-CoA or acyl-ACP. In Wolbachia pipientis wMel, this protein is Glycerol-3-phosphate acyltransferase.